The sequence spans 432 residues: Adenylosuccinate synthetase 1 (432 aa).

GTP is bound by residues 12–18 and 40–42; these read GDEGKGR and GHT. Asp13 acts as the Proton acceptor in catalysis. 2 residues coordinate Mg(2+): Asp13 and Gly40. IMP contacts are provided by residues 13–16, 38–41, Thr128, Arg142, Gln222, Thr237, and Arg301; these read DEGK and NAGH. The active-site Proton donor is the His41. Substrate is bound at residue 297–303; the sequence is TNTGRPR. Residues Arg303, 329–331, and 411–413 each bind GTP; these read KLD and STG.

The protein belongs to the adenylosuccinate synthetase family. As to quaternary structure, homodimer. Requires Mg(2+) as cofactor.

It is found in the cytoplasm. The enzyme catalyses IMP + L-aspartate + GTP = N(6)-(1,2-dicarboxyethyl)-AMP + GDP + phosphate + 2 H(+). It participates in purine metabolism; AMP biosynthesis via de novo pathway; AMP from IMP: step 1/2. Its function is as follows. Plays an important role in the de novo pathway of purine nucleotide biosynthesis. Catalyzes the first committed step in the biosynthesis of AMP from IMP. The protein is Adenylosuccinate synthetase 1 of Chromobacterium violaceum (strain ATCC 12472 / DSM 30191 / JCM 1249 / CCUG 213 / NBRC 12614 / NCIMB 9131 / NCTC 9757 / MK).